We begin with the raw amino-acid sequence, 42 residues long: Small, acid-soluble spore protein L (42 aa).

A disordered region spans residues 1 to 42 (MKKKDKGRLTGGVTPQGDLEGNTHNDPKTELEERAKKSNTKR). Residues 21–36 (GNTHNDPKTELEERAK) are compositionally biased toward basic and acidic residues.

The protein resides in the spore core. In Bacillus subtilis (strain 168), this protein is Small, acid-soluble spore protein L (sspL).